We begin with the raw amino-acid sequence, 572 residues long: Hemagglutinin-neuraminidase (572 aa).

Topologically, residues 1 to 31 (MEYWKHTNHGKDAGNELETSMATHGNKLTNK) are intravirion. Residues 32-52 (IIYILWTIILVLLSIVFIIVL) form a helical membrane-spanning segment. At 53 to 572 (INSIKSEKAH…FKTEIPKSCS (520 aa)) the chain is on the virion surface side. Disulfide bonds link C190-C214 and C256-C269. Residues 252 to 257 (NRKSCS) form an involved in neuraminidase activity region. N-linked (GlcNAc...) asparagine; by host glycosylation is found at N308 and N351. Cystine bridges form between C355–C469 and C463–C473. N523 carries N-linked (GlcNAc...) asparagine; by host glycosylation. A disulfide bridge links C535 with C544.

This sequence belongs to the paramyxoviruses hemagglutinin-neuraminidase family. In terms of assembly, homotetramer; composed of disulfide-linked homodimers. Interacts with F protein trimer.

It is found in the virion membrane. Its subcellular location is the host cell membrane. The catalysed reaction is Hydrolysis of alpha-(2-&gt;3)-, alpha-(2-&gt;6)-, alpha-(2-&gt;8)- glycosidic linkages of terminal sialic acid residues in oligosaccharides, glycoproteins, glycolipids, colominic acid and synthetic substrates.. Its function is as follows. Attaches the virus to sialic acid-containing cell receptors and thereby initiating infection. Binding of HN protein to the receptor induces a conformational change that allows the F protein to trigger virion/cell membranes fusion. In terms of biological role, neuraminidase activity ensures the efficient spread of the virus by dissociating the mature virions from the neuraminic acid containing glycoproteins. This Homo sapiens (Human) protein is Hemagglutinin-neuraminidase (HN).